A 436-amino-acid chain; its full sequence is 3-ketoacyl-CoA thiolase (436 aa).

The active-site Acyl-thioester intermediate is the C99. Active-site proton acceptor residues include H392 and C422.

This sequence belongs to the thiolase-like superfamily. Thiolase family. In terms of assembly, heterotetramer of two alpha chains (FadJ) and two beta chains (FadI).

The protein localises to the cytoplasm. It carries out the reaction an acyl-CoA + acetyl-CoA = a 3-oxoacyl-CoA + CoA. The protein operates within lipid metabolism; fatty acid beta-oxidation. In terms of biological role, catalyzes the final step of fatty acid oxidation in which acetyl-CoA is released and the CoA ester of a fatty acid two carbons shorter is formed. This is 3-ketoacyl-CoA thiolase from Shewanella amazonensis (strain ATCC BAA-1098 / SB2B).